Reading from the N-terminus, the 1115-residue chain is Tbc2 translation factor, chloroplastic (1115 aa).

2 stretches are compositionally biased toward low complexity: residues Thr-69–Ser-87 and Arg-163–Ala-175. 2 disordered regions span residues Thr-69–Leu-90 and Arg-163–Ser-210. The span at Arg-176–Gly-186 shows a compositional bias: gly residues. A compositionally biased stretch (low complexity) spans Ser-187–Ser-210. Tandem repeats lie at residues Leu-483–Ala-521, Leu-607–Ala-645, Leu-685–Ala-723, Leu-724–Leu-763, Met-764–Cys-803, Leu-804–Arg-842, Met-843–Arg-880, Pro-990–Trp-1029, and Trp-1030–Ala-1068. The 9 X 38 AA approximate repeats stretch occupies residues Leu-483–Ala-1068.

Part of a 400 kDa complex which is not stably associated with RNA.

Its subcellular location is the plastid. The protein localises to the chloroplast stroma. Functionally, required for expression of the chloroplast encoded psbC mRNA, most likely for translation initiation. Interacts with the 5'-UTR of psbC. The polypeptide is Tbc2 translation factor, chloroplastic (TBC2) (Chlamydomonas reinhardtii (Chlamydomonas smithii)).